The sequence spans 218 residues: GTP cyclohydrolase 1 (218 aa).

Residues cysteine 109, histidine 112, and cysteine 180 each coordinate Zn(2+).

Belongs to the GTP cyclohydrolase I family. In terms of assembly, toroid-shaped homodecamer, composed of two pentamers of five dimers.

It catalyses the reaction GTP + H2O = 7,8-dihydroneopterin 3'-triphosphate + formate + H(+). The protein operates within cofactor biosynthesis; 7,8-dihydroneopterin triphosphate biosynthesis; 7,8-dihydroneopterin triphosphate from GTP: step 1/1. The sequence is that of GTP cyclohydrolase 1 (folE) from Pasteurella multocida (strain Pm70).